Consider the following 222-residue polypeptide: UPF0758 protein YicR (222 aa).

Residues 100–222 (PLLSPEMTRE…NVSFAERGWI (123 aa)) form the MPN domain. Positions 171, 173, and 184 each coordinate Zn(2+). A JAMM motif motif is present at residues 171-184 (HNHPSGCAEPSKAD).

Belongs to the UPF0758 family. YicR subfamily.

The polypeptide is UPF0758 protein YicR (Shigella boydii serotype 18 (strain CDC 3083-94 / BS512)).